The sequence spans 382 residues: Lipid-A-disaccharide synthase (382 aa).

The protein belongs to the LpxB family.

It catalyses the reaction 2-N,3-O-bis[(3R)-3-hydroxytetradecanoyl]-alpha-D-glucosaminyl 1-phosphate + UDP-2-N,3-O-bis[(3R)-3-hydroxytetradecanoyl]-alpha-D-glucosamine = lipid A disaccharide (E. coli) + UDP + H(+). The catalysed reaction is a lipid X + a UDP-2-N,3-O-bis[(3R)-3-hydroxyacyl]-alpha-D-glucosamine = a lipid A disaccharide + UDP + H(+). The protein operates within glycolipid biosynthesis; lipid IV(A) biosynthesis; lipid IV(A) from (3R)-3-hydroxytetradecanoyl-[acyl-carrier-protein] and UDP-N-acetyl-alpha-D-glucosamine: step 5/6. Its function is as follows. Condensation of UDP-2,3-diacylglucosamine and 2,3-diacylglucosamine-1-phosphate to form lipid A disaccharide, a precursor of lipid A, a phosphorylated glycolipid that anchors the lipopolysaccharide to the outer membrane of the cell. The polypeptide is Lipid-A-disaccharide synthase (Escherichia coli (strain 55989 / EAEC)).